The sequence spans 204 residues: Transcriptional regulator GfcR (204 aa).

It belongs to the purine/pyrimidine phosphoribosyltransferase family. GfcR subfamily.

In Methanoculleus marisnigri (strain ATCC 35101 / DSM 1498 / JR1), this protein is Transcriptional regulator GfcR.